Here is a 258-residue protein sequence, read N- to C-terminus: Snake venom serine protease (258 aa).

The N-terminal stretch at 1-18 is a signal peptide; sequence MVLIRVLANLLILQLSYA. The propeptide occupies 19–24; the sequence is QKSSEL. The Peptidase S1 domain maps to 25–249; that stretch reads VIGGDECNIN…YTEWIQSILA (225 aa). 6 disulfides stabilise this stretch: Cys31/Cys163, Cys50/Cys66, Cys98/Cys256, Cys142/Cys210, Cys174/Cys189, and Cys200/Cys225. Residues His65 and Asp110 each act as charge relay system in the active site. Residue Asn154 is glycosylated (N-linked (GlcNAc...) asparagine). Residue Ser204 is the Charge relay system of the active site.

The protein belongs to the peptidase S1 family. Snake venom subfamily. In terms of assembly, monomer. Expressed by the venom gland.

It is found in the secreted. Its function is as follows. Snake venom serine protease that may act in the hemostasis system of the prey. The protein is Snake venom serine protease of Lachesis stenophrys (Central American bushmaster).